Reading from the N-terminus, the 274-residue chain is Dermonecrotic toxin LspiSicTox-betaIII1 G (274 aa).

His-5 is an active-site residue. Positions 25 and 27 each coordinate Mg(2+). His-41 (nucleophile) is an active-site residue. 2 cysteine pairs are disulfide-bonded: Cys-45-Cys-51 and Cys-47-Cys-189. A glycan (N-linked (GlcNAc...) asparagine) is linked at Asn-66. A Mg(2+)-binding site is contributed by Asp-85.

Belongs to the arthropod phospholipase D family. Class II subfamily. Mg(2+) is required as a cofactor. In terms of tissue distribution, expressed by the venom gland.

It is found in the secreted. The enzyme catalyses an N-(acyl)-sphingosylphosphocholine = an N-(acyl)-sphingosyl-1,3-cyclic phosphate + choline. It carries out the reaction an N-(acyl)-sphingosylphosphoethanolamine = an N-(acyl)-sphingosyl-1,3-cyclic phosphate + ethanolamine. It catalyses the reaction a 1-acyl-sn-glycero-3-phosphocholine = a 1-acyl-sn-glycero-2,3-cyclic phosphate + choline. The catalysed reaction is a 1-acyl-sn-glycero-3-phosphoethanolamine = a 1-acyl-sn-glycero-2,3-cyclic phosphate + ethanolamine. In terms of biological role, dermonecrotic toxins cleave the phosphodiester linkage between the phosphate and headgroup of certain phospholipids (sphingolipid and lysolipid substrates), forming an alcohol (often choline) and a cyclic phosphate. This toxin acts on sphingomyelin (SM). It may also act on ceramide phosphoethanolamine (CPE), lysophosphatidylcholine (LPC) and lysophosphatidylethanolamine (LPE), but not on lysophosphatidylserine (LPS), and lysophosphatidylglycerol (LPG). It acts by transphosphatidylation, releasing exclusively cyclic phosphate products as second products. Induces dermonecrosis, hemolysis, increased vascular permeability, edema, inflammatory response, and platelet aggregation. This is Dermonecrotic toxin LspiSicTox-betaIII1 G from Loxosceles spinulosa (Recluse spider).